We begin with the raw amino-acid sequence, 396 residues long: Succinyl-CoA:mesaconate CoA-transferase (396 aa).

The active-site Nucleophile is aspartate 175.

The protein belongs to the CoA-transferase III family. In terms of assembly, homodimer.

The enzyme catalyses mesaconate + succinyl-CoA = 2-methylfumaryl-CoA + succinate. Shows highest activity at 4 M KCl. Does not require divalent ions for activity. In terms of biological role, involved in the methylaspartate cycle. Catalyzes the transfer of the CoA moiety from succinyl-CoA to mesaconate to generate mesaconyl-CoA (2-methylfumaryl-CoA) and succinate. Also shows high activity with methylsuccinate as CoA-acceptor, and only low activity with glutarate, acrylate and itaconate. Cannot use other CoA donors like acetyl-CoA, propionyl-CoA, butyryl-CoA or acetoacetyl-CoA. The chain is Succinyl-CoA:mesaconate CoA-transferase from Haloarcula hispanica (strain ATCC 33960 / DSM 4426 / JCM 8911 / NBRC 102182 / NCIMB 2187 / VKM B-1755).